Here is a 542-residue protein sequence, read N- to C-terminus: Chaperonin GroEL (542 aa).

ATP is bound by residues threonine 29 to proline 32, aspartate 86 to threonine 90, glycine 413, asparagine 476 to alanine 478, and aspartate 492.

This sequence belongs to the chaperonin (HSP60) family. In terms of assembly, forms a cylinder of 14 subunits composed of two heptameric rings stacked back-to-back. Interacts with the co-chaperonin GroES.

Its subcellular location is the cytoplasm. The enzyme catalyses ATP + H2O + a folded polypeptide = ADP + phosphate + an unfolded polypeptide.. Its function is as follows. Together with its co-chaperonin GroES, plays an essential role in assisting protein folding. The GroEL-GroES system forms a nano-cage that allows encapsulation of the non-native substrate proteins and provides a physical environment optimized to promote and accelerate protein folding. This is Chaperonin GroEL from Lactococcus lactis subsp. cremoris (strain MG1363).